The sequence spans 1546 residues: Hybrid signal transduction histidine kinase D (1546 aa).

Residues Met36–Ser63 adopt a coiled-coil conformation. The 67-residue stretch at Lys65 to His131 folds into the PAS domain. Positions Ile139–Arg193 constitute a PAC domain. In terms of domain architecture, Histidine kinase 1 spans Asn218 to Pro440. His221 carries the phosphohistidine; by autocatalysis modification. One can recognise a Response regulatory 1 domain in the interval Ile571–Met686. Asp619 is subject to 4-aspartylphosphate. The 264-residue stretch at Asn747–Lys1010 folds into the Histidine kinase 2 domain. His750 carries the phosphohistidine; by autocatalysis modification. 2 stretches are compositionally biased toward low complexity: residues Ser1013–Leu1031 and Asn1042–Asn1146. Disordered regions lie at residues Ser1013–Lys1148, Asn1266–Ser1285, and Pro1313–Ser1350. Positions Pro1313–Pro1346 are enriched in low complexity. The 125-residue stretch at Gln1359–Ile1483 folds into the Response regulatory 2 domain. A 4-aspartylphosphate modification is found at Asp1412. Positions Gln1500–Gln1546 are disordered. Over residues Asn1501–Gly1526 the composition is skewed to low complexity.

The enzyme catalyses ATP + protein L-histidine = ADP + protein N-phospho-L-histidine.. Functionally, acts as a receptor histidine kinase for a signal transduction pathway. This protein undergoes an ATP-dependent autophosphorylation at a conserved histidine residue in the kinase core, and a phosphoryl group is then transferred to a conserved aspartate residue in the receiver domain. This chain is Hybrid signal transduction histidine kinase D (dhkD), found in Dictyostelium discoideum (Social amoeba).